Here is a 360-residue protein sequence, read N- to C-terminus: Peptide chain release factor 1 (360 aa).

An N5-methylglutamine modification is found at glutamine 237.

Belongs to the prokaryotic/mitochondrial release factor family. Methylated by PrmC. Methylation increases the termination efficiency of RF1.

Its subcellular location is the cytoplasm. Peptide chain release factor 1 directs the termination of translation in response to the peptide chain termination codons UAG and UAA. The polypeptide is Peptide chain release factor 1 (Pseudomonas putida (strain ATCC 700007 / DSM 6899 / JCM 31910 / BCRC 17059 / LMG 24140 / F1)).